The following is a 491-amino-acid chain: Protein nucleotidyltransferase YdiU (491 aa).

Residues Gly94, Gly96, Arg97, Lys117, Asp129, Gly130, Arg180, and Arg187 each coordinate ATP. The Proton acceptor role is filled by Asp256. Mg(2+) contacts are provided by Asn257 and Asp266. Asp266 lines the ATP pocket.

Belongs to the SELO family. Requires Mg(2+) as cofactor. It depends on Mn(2+) as a cofactor.

The catalysed reaction is L-seryl-[protein] + ATP = 3-O-(5'-adenylyl)-L-seryl-[protein] + diphosphate. It carries out the reaction L-threonyl-[protein] + ATP = 3-O-(5'-adenylyl)-L-threonyl-[protein] + diphosphate. It catalyses the reaction L-tyrosyl-[protein] + ATP = O-(5'-adenylyl)-L-tyrosyl-[protein] + diphosphate. The enzyme catalyses L-histidyl-[protein] + UTP = N(tele)-(5'-uridylyl)-L-histidyl-[protein] + diphosphate. The catalysed reaction is L-seryl-[protein] + UTP = O-(5'-uridylyl)-L-seryl-[protein] + diphosphate. It carries out the reaction L-tyrosyl-[protein] + UTP = O-(5'-uridylyl)-L-tyrosyl-[protein] + diphosphate. Functionally, nucleotidyltransferase involved in the post-translational modification of proteins. It can catalyze the addition of adenosine monophosphate (AMP) or uridine monophosphate (UMP) to a protein, resulting in modifications known as AMPylation and UMPylation. In Clostridium botulinum (strain Eklund 17B / Type B), this protein is Protein nucleotidyltransferase YdiU.